The sequence spans 274 residues: Large ribosomal subunit protein uL2 (274 aa).

Disordered stretches follow at residues 35–60 (EPQH…GHKH) and 224–274 (VMNP…RRKK). Residues 50 to 60 (TTRHKGGGHKH) show a composition bias toward basic residues. Positions 229 to 246 (DHPHGGGEGKTGEGRHAV) are enriched in basic and acidic residues.

This sequence belongs to the universal ribosomal protein uL2 family. Part of the 50S ribosomal subunit. Forms a bridge to the 30S subunit in the 70S ribosome.

One of the primary rRNA binding proteins. Required for association of the 30S and 50S subunits to form the 70S ribosome, for tRNA binding and peptide bond formation. It has been suggested to have peptidyltransferase activity; this is somewhat controversial. Makes several contacts with the 16S rRNA in the 70S ribosome. The protein is Large ribosomal subunit protein uL2 of Delftia acidovorans (strain DSM 14801 / SPH-1).